The chain runs to 300 residues: Erythroblast NAD(P)(+)--arginine ADP-ribosyltransferase (300 aa).

The N-terminal stretch at 1–22 is a signal peptide; the sequence is MEEPLLHAILGLVLLLSTRTDA. 2 cysteine pairs are disulfide-bonded: Cys51–Cys260 and Cys159–Cys208. In terms of domain architecture, TR mART core spans 70-256; it reads ETFAEGWRSA…IQLRSQGKSS (187 aa). NAD(+) contacts are provided by Tyr107, Arg164, and Gln183. Arg164 is an active-site residue. Ser186 is an active-site residue. Residue Ser217 participates in NAD(+) binding. The active site involves Glu224. Positions 276–300 are disordered; that stretch reads SADKSSPLPRSPWPGWAPLAAPHSH.

The protein belongs to the Arg-specific ADP-ribosyltransferase family.

The enzyme catalyses L-arginyl-[protein] + NAD(+) = N(omega)-(ADP-D-ribosyl)-L-arginyl-[protein] + nicotinamide + H(+). The chain is Erythroblast NAD(P)(+)--arginine ADP-ribosyltransferase (MADPRT) from Gallus gallus (Chicken).